A 122-amino-acid polypeptide reads, in one-letter code: NADH-quinone oxidoreductase subunit A (122 aa).

3 helical membrane passes run 10–30 (MIVL…LTLG), 66–86 (IFAL…PWAV), and 91–111 (LGLF…VGLA).

It belongs to the complex I subunit 3 family. In terms of assembly, NDH-1 is composed of 14 different subunits. Subunits NuoA, H, J, K, L, M, N constitute the membrane sector of the complex.

It is found in the cell membrane. The catalysed reaction is a quinone + NADH + 5 H(+)(in) = a quinol + NAD(+) + 4 H(+)(out). NDH-1 shuttles electrons from NADH, via FMN and iron-sulfur (Fe-S) centers, to quinones in the respiratory chain. The immediate electron acceptor for the enzyme in this species is believed to be a menaquinone. Couples the redox reaction to proton translocation (for every two electrons transferred, four hydrogen ions are translocated across the cytoplasmic membrane), and thus conserves the redox energy in a proton gradient. The chain is NADH-quinone oxidoreductase subunit A from Bacillus anthracis.